Reading from the N-terminus, the 472-residue chain is MPIATINPATGETVKTFTPASDAEVDAAIARAYERFLDYRHSTTFAQRAQWANATADLLEAEADEVAAMMTLEMGKTLKSAKAEALKCAKGFRYYAQNAEQLLADEPADAGKVGAARAYIRYQPLGVVLAVMPWNFPLWQAVRFAAPALMAGNVGILKHASNVPQSALYLADVITRGGFPEGCFQTLLVPSSAVERILRDPRVAAATLTGSEPAGQSVAAIAGDEIKPTVLELGGSDPFIVMPSADLDEAVKTAVTARVQNNGQSCIAAKRFIVHTDIYDAFVDKFVEQMKALKVGDPTDPATDVGPLATESGRDEIAKQVDDAVAAGATLRCGGKPLDGPGWFYPPTVVTDITKDMALYTEEVFGPVASMYRAADIDEAIEIANATTFGLGSNAWTNDAAEQQRFIDDIEAGQVFINGMTVSYPELGFGGVKRSGYGRELAGLGIRAFCNAKTVWIGSSKSGDAGGGSKVE.

Residues 134 to 135, 158 to 161, and 210 to 211 contribute to the NADP(+) site; these read WN, KHAS, and GS. The active-site Proton acceptor is glutamate 232. Leucine 233 provides a ligand contact to NADP(+). Cysteine 266 acts as the Nucleophile in catalysis. Glutamate 363 contacts NADP(+).

Belongs to the aldehyde dehydrogenase family.

The enzyme catalyses succinate semialdehyde + NADP(+) + H2O = succinate + NADPH + 2 H(+). Functionally, catalyzes the NADP(+)-dependent oxidation of succinate semialdehyde to succinate. It is believed to be the main source of succinate semialdehyde dehydrogenase activity in Mycobacterium. The protein is Succinate-semialdehyde dehydrogenase [NADP(+)] (gabD1) of Mycolicibacterium paratuberculosis (strain ATCC BAA-968 / K-10) (Mycobacterium paratuberculosis).